Consider the following 130-residue polypeptide: Small ribosomal subunit protein uS9 (130 aa).

This sequence belongs to the universal ribosomal protein uS9 family.

The sequence is that of Small ribosomal subunit protein uS9 from Agathobacter rectalis (strain ATCC 33656 / DSM 3377 / JCM 17463 / KCTC 5835 / VPI 0990) (Eubacterium rectale).